The following is a 297-amino-acid chain: Heme A synthase (297 aa).

Residues 1–6 are Cytoplasmic-facing; that stretch reads MNRKLS. A helical membrane pass occupies residues 7–27; the sequence is IFSAFVTFTMMIVLLMGGTVT. Residues 28–62 are Extracellular-facing; sequence KTDSGNGCGTDWPLCHGELIPTNPSVETMIEYSHR. A disulfide bridge links cysteine 35 with cysteine 42. Glutamate 58 is an active-site residue. Position 61 (histidine 61) interacts with heme o. The helical transmembrane segment at 63–83 threads the bilayer; that stretch reads AVTGVVGLLIIALCLWTLVAF. At 84–90 the chain is on the cytoplasmic side; sequence KDRLDIK. A helical transmembrane segment spans residues 91-111; it reads IFAFLAFIFMLIQSIVGAGAV. Residues 112-121 are Extracellular-facing; that stretch reads VWQQSDLVMA. A helical transmembrane segment spans residues 122–142; sequence LHFGISLISFASLLILTILIM. Histidine 123 provides a ligand contact to heme o. Residues 143 to 160 are Cytoplasmic-facing; the sequence is ERSGQEFRESVPAFLRKL. The helical transmembrane segment at 161–181 threads the bilayer; the sequence is LYGLLIYTLIVVYTGAFVRHV. Residues 182-201 are Extracellular-facing; that stretch reads GATYACVGWPVCSQPTMTFE. Cysteine 187 and cysteine 193 are disulfide-bonded. A helical transmembrane segment spans residues 202-222; that stretch reads AWVQMIHRILAGLLFFYTLFV. Residue histidine 208 coordinates heme b. At 223 to 236 the chain is on the cytoplasmic side; the sequence is HYTAIRLKHRTSRT. Residues 237 to 257 form a helical membrane-spanning segment; sequence GMLFATFFISCQVATGAWIVL. Residues 258–262 lie on the Extracellular side of the membrane; it reads GGHAT. A helical membrane pass occupies residues 263–283; sequence YVPLLHAFLITCYFGVISYLA. Histidine 268 lines the heme b pocket. At 284–297 the chain is on the cytoplasmic side; sequence YHAFRTRKKDSRLR.

Belongs to the COX15/CtaA family. Type 1 subfamily. As to quaternary structure, interacts with CtaB. The cofactor is heme b.

The protein resides in the cell membrane. The enzyme catalyses Fe(II)-heme o + 2 A + H2O = Fe(II)-heme a + 2 AH2. It participates in porphyrin-containing compound metabolism; heme A biosynthesis; heme A from heme O: step 1/1. Functionally, catalyzes the conversion of heme O to heme A by two successive hydroxylations of the methyl group at C8. The first hydroxylation forms heme I, the second hydroxylation results in an unstable dihydroxymethyl group, which spontaneously dehydrates, resulting in the formyl group of heme A. This Exiguobacterium sibiricum (strain DSM 17290 / CCUG 55495 / CIP 109462 / JCM 13490 / 255-15) protein is Heme A synthase.